A 383-amino-acid polypeptide reads, in one-letter code: UDP-N-acetylglucosamine--N-acetylmuramyl-(pentapeptide) pyrophosphoryl-undecaprenol N-acetylglucosamine transferase (383 aa).

Residues threonine 10–glycine 12, asparagine 124, arginine 165, serine 190, isoleucine 245, and glutamine 290 contribute to the UDP-N-acetyl-alpha-D-glucosamine site. Residues proline 364–serine 383 are disordered.

The protein belongs to the glycosyltransferase 28 family. MurG subfamily.

It localises to the cell inner membrane. The enzyme catalyses di-trans,octa-cis-undecaprenyl diphospho-N-acetyl-alpha-D-muramoyl-L-alanyl-D-glutamyl-meso-2,6-diaminopimeloyl-D-alanyl-D-alanine + UDP-N-acetyl-alpha-D-glucosamine = di-trans,octa-cis-undecaprenyl diphospho-[N-acetyl-alpha-D-glucosaminyl-(1-&gt;4)]-N-acetyl-alpha-D-muramoyl-L-alanyl-D-glutamyl-meso-2,6-diaminopimeloyl-D-alanyl-D-alanine + UDP + H(+). The protein operates within cell wall biogenesis; peptidoglycan biosynthesis. Cell wall formation. Catalyzes the transfer of a GlcNAc subunit on undecaprenyl-pyrophosphoryl-MurNAc-pentapeptide (lipid intermediate I) to form undecaprenyl-pyrophosphoryl-MurNAc-(pentapeptide)GlcNAc (lipid intermediate II). The chain is UDP-N-acetylglucosamine--N-acetylmuramyl-(pentapeptide) pyrophosphoryl-undecaprenol N-acetylglucosamine transferase from Anaeromyxobacter dehalogenans (strain 2CP-C).